A 132-amino-acid chain; its full sequence is Small ribosomal subunit protein uS8 (132 aa).

Belongs to the universal ribosomal protein uS8 family. As to quaternary structure, part of the 30S ribosomal subunit. Contacts proteins S5 and S12.

Its function is as follows. One of the primary rRNA binding proteins, it binds directly to 16S rRNA central domain where it helps coordinate assembly of the platform of the 30S subunit. The polypeptide is Small ribosomal subunit protein uS8 (Geobacter metallireducens (strain ATCC 53774 / DSM 7210 / GS-15)).